Here is a 452-residue protein sequence, read N- to C-terminus: tRNA modification GTPase MnmE (452 aa).

(6S)-5-formyl-5,6,7,8-tetrahydrofolate-binding residues include R21, E78, and K118. The TrmE-type G domain occupies G214 to G375. N224 lines the K(+) pocket. Residues N224 to S229, T243 to T249, and D268 to G271 contribute to the GTP site. S228 contacts Mg(2+). Residues T243, I245, and T248 each contribute to the K(+) site. A Mg(2+)-binding site is contributed by T249. A (6S)-5-formyl-5,6,7,8-tetrahydrofolate-binding site is contributed by K452.

This sequence belongs to the TRAFAC class TrmE-Era-EngA-EngB-Septin-like GTPase superfamily. TrmE GTPase family. Homodimer. Heterotetramer of two MnmE and two MnmG subunits. K(+) is required as a cofactor.

The protein resides in the cytoplasm. Its function is as follows. Exhibits a very high intrinsic GTPase hydrolysis rate. Involved in the addition of a carboxymethylaminomethyl (cmnm) group at the wobble position (U34) of certain tRNAs, forming tRNA-cmnm(5)s(2)U34. This chain is tRNA modification GTPase MnmE, found in Haemophilus influenzae (strain ATCC 51907 / DSM 11121 / KW20 / Rd).